A 113-amino-acid polypeptide reads, in one-letter code: Prefoldin subunit beta (113 aa).

This sequence belongs to the prefoldin subunit beta family. In terms of assembly, heterohexamer of two alpha and four beta subunits.

It is found in the cytoplasm. Molecular chaperone capable of stabilizing a range of proteins. Seems to fulfill an ATP-independent, HSP70-like function in archaeal de novo protein folding. This is Prefoldin subunit beta from Methanococcus vannielii (strain ATCC 35089 / DSM 1224 / JCM 13029 / OCM 148 / SB).